A 1161-amino-acid polypeptide reads, in one-letter code: Cingulin (1161 aa).

The segment at 1 to 403 (MSSLSADRKP…SLIHERFCGV (403 aa)) is head. 6 disordered regions span residues 29–53 (GGFPDKSRLANGVGGVSNGTSSPSK), 79–309 (SYGV…LGRD), 649–678 (QSELEKQKAETLKKQEELKSATRASEKRET), 699–721 (SKAIEKTQQPLVSDQTKDPESNL), 739–773 (RLHSSVPDSSSSDALEEENRSLKTQLEESRRAASR), and 1123–1161 (QSRRSTLGSTLSSDEEDNYSDTKSITSILTDSPLQTTSC). The short motif at 51–65 (PSKYGVAVRVQGISG) is the ZIM element. Composition is skewed to polar residues over residues 84–104 (LKTQPQIQSAPPVVSQTSPYN) and 117–129 (PQGSYNPTDQPSS). Positions 189 to 203 (NGIGSSLNGTGLNGS) are enriched in low complexity. A compositionally biased stretch (polar residues) spans 273–305 (EASSTSPTINPYAPNTSATVPKLNSTKPSSTGS). Residues 413–1128 (SNMKTELEQA…RKIQQSRRST (716 aa)) adopt a coiled-coil conformation. The span at 742–751 (SSVPDSSSSD) shows a compositional bias: low complexity. A compositionally biased stretch (basic and acidic residues) spans 755–773 (EENRSLKTQLEESRRAASR). Positions 1122–1161 (QQSRRSTLGSTLSSDEEDNYSDTKSITSILTDSPLQTTSC) are tail. A compositionally biased stretch (low complexity) spans 1124 to 1134 (SRRSTLGSTLS). Polar residues predominate over residues 1143–1161 (DTKSITSILTDSPLQTTSC).

This sequence belongs to the cingulin family. In terms of assembly, homodimer.

The protein resides in the cell junction. It is found in the tight junction. In terms of biological role, probably plays a role in the formation and regulation of the tight junction (TJ) paracellular permeability barrier. Note=Localizes to the apical junction complex composed of tight and adherens junctions. The sequence is that of Cingulin from Danio rerio (Zebrafish).